The primary structure comprises 233 residues: Pilin-like protein PilA3 (233 aa).

Positions 1–4 (MKRG) are cleaved as a propeptide — leader sequence. Phe5 carries the N-methylphenylalanine modification. The helical transmembrane segment at 5–25 (FTLVEVLVAMAILVVVLAVGV) threads the bilayer. The tract at residues 121-143 (LRRSDVNATPSSGSDCTTPPPNS) is disordered. Polar residues predominate over residues 126–137 (VNATPSSGSDCT).

It localises to the cell inner membrane. It is found in the cell outer membrane. The protein resides in the periplasm. Its function is as follows. Plays an essential role in natural DNA transformation but is not required for pilus biogenesis. This chain is Pilin-like protein PilA3 (pilA3), found in Thermus thermophilus (strain ATCC BAA-163 / DSM 7039 / HB27).